Reading from the N-terminus, the 366-residue chain is tRNA/tmRNA (uracil-C(5))-methyltransferase (366 aa).

S-adenosyl-L-methionine-binding residues include glutamine 190, tyrosine 218, asparagine 223, glutamate 239, and aspartate 299. The Nucleophile role is filled by cysteine 324. Glutamate 358 acts as the Proton acceptor in catalysis.

It belongs to the class I-like SAM-binding methyltransferase superfamily. RNA M5U methyltransferase family. TrmA subfamily.

It carries out the reaction uridine(54) in tRNA + S-adenosyl-L-methionine = 5-methyluridine(54) in tRNA + S-adenosyl-L-homocysteine + H(+). It catalyses the reaction uridine(341) in tmRNA + S-adenosyl-L-methionine = 5-methyluridine(341) in tmRNA + S-adenosyl-L-homocysteine + H(+). Functionally, dual-specificity methyltransferase that catalyzes the formation of 5-methyluridine at position 54 (m5U54) in all tRNAs, and that of position 341 (m5U341) in tmRNA (transfer-mRNA). This chain is tRNA/tmRNA (uracil-C(5))-methyltransferase, found in Shigella boydii serotype 18 (strain CDC 3083-94 / BS512).